A 497-amino-acid chain; its full sequence is Probable malate:quinone oxidoreductase (497 aa).

The protein belongs to the MQO family. FAD is required as a cofactor.

It carries out the reaction (S)-malate + a quinone = a quinol + oxaloacetate. It functions in the pathway carbohydrate metabolism; tricarboxylic acid cycle; oxaloacetate from (S)-malate (quinone route): step 1/1. This is Probable malate:quinone oxidoreductase from Rhodopseudomonas palustris (strain TIE-1).